An 87-amino-acid polypeptide reads, in one-letter code: Large ribosomal subunit protein bL27 (87 aa).

The tract at residues 1–21 (MAHKKAGGSSRNGRDSESKRL) is disordered.

The protein belongs to the bacterial ribosomal protein bL27 family.

This chain is Large ribosomal subunit protein bL27, found in Aromatoleum aromaticum (strain DSM 19018 / LMG 30748 / EbN1) (Azoarcus sp. (strain EbN1)).